The sequence spans 92 residues: Small ribosomal subunit protein bS20 (92 aa).

The interval 1-20 (MANIASAKKRARQAENNRAH) is disordered.

Belongs to the bacterial ribosomal protein bS20 family.

In terms of biological role, binds directly to 16S ribosomal RNA. The sequence is that of Small ribosomal subunit protein bS20 from Methylococcus capsulatus (strain ATCC 33009 / NCIMB 11132 / Bath).